Reading from the N-terminus, the 378-residue chain is Alkanesulfonate monooxygenase (378 aa).

This sequence belongs to the SsuD family.

It carries out the reaction an alkanesulfonate + FMNH2 + O2 = an aldehyde + FMN + sulfite + H2O + 2 H(+). In terms of biological role, catalyzes the desulfonation of aliphatic sulfonates. The chain is Alkanesulfonate monooxygenase from Bacillus velezensis (strain DSM 23117 / BGSC 10A6 / LMG 26770 / FZB42) (Bacillus amyloliquefaciens subsp. plantarum).